Here is a 198-residue protein sequence, read N- to C-terminus: MHYPEPLSKLIDSFMKLPGIGPKTAARLAFHVLAMKEDTVLEFAKALVDVKRHIHYCTICGHITDTDPCYICKDERRDRTTICVVQDPKDVIAMERMKEYNGLYHVLHGAISPMEGIGPEDIKIAELLTRLQDETVQEVILATDPNIEGEATAMYISRLLKPTGIKVTRIAHGLPVGGDLEYADEVTLSKALEGRREL.

A C4-type zinc finger spans residues Cys-57–Cys-72. The region spanning Thr-80–Pro-175 is the Toprim domain.

This sequence belongs to the RecR family.

In terms of biological role, may play a role in DNA repair. It seems to be involved in an RecBC-independent recombinational process of DNA repair. It may act with RecF and RecO. This Geobacillus kaustophilus (strain HTA426) protein is Recombination protein RecR.